A 416-amino-acid polypeptide reads, in one-letter code: Peptide chain release factor subunit 1 (416 aa).

It belongs to the eukaryotic release factor 1 family. Heterodimer of two subunits, one of which binds GTP.

It localises to the cytoplasm. In terms of biological role, directs the termination of nascent peptide synthesis (translation) in response to the termination codons UAA, UAG and UGA. The chain is Peptide chain release factor subunit 1 from Halobacterium salinarum (strain ATCC 29341 / DSM 671 / R1).